We begin with the raw amino-acid sequence, 401 residues long: G2/mitotic-specific cyclin-B1 (401 aa).

Belongs to the cyclin family. Cyclin AB subfamily. Interacts with the CDK1 protein kinase to form a serine/threonine kinase holoenzyme complex also known as maturation promoting factor (MPF). The cyclin subunit imparts substrate specificity to the complex.

Functionally, essential for the control of the cell cycle at the G2/M (mitosis) transition. The polypeptide is G2/mitotic-specific cyclin-B1 (ccnb1) (Oryzias luzonensis (Luzon ricefish)).